The chain runs to 300 residues: Protein CANDIDATE G-PROTEIN COUPLED RECEPTOR 2 (300 aa).

Helical transmembrane passes span 37 to 57 (GFLH…YLAY), 73 to 93 (IMIA…AWCC), 110 to 130 (LTLF…AFLF), 152 to 172 (IGLD…PLFI), 183 to 203 (WGLW…IFFM), 222 to 242 (ITVM…TANG), and 245 to 265 (FGLW…LPLL).

It belongs to the UPF0359 family. As to quaternary structure, interacts with GPA1. Expressed at low levels in seedlings.

Its subcellular location is the cell membrane. Functionally, plays a role in plants and microbes interactions. G-protein coupled melatonin receptor involved in root growth mediated by the bacterial quorum-sensing signals N-acyl-homoserine lactones (AHLs). Binds to melatonin. Phytomelatonin receptor required, in collaboration with GPA1, for melatonin-mediated stomatal closure involving H(2)O(2) and Ca(2+) signals. Essential for melatonin-mediated plant response to osmotic stress probably by activating reactive oxygen species (ROS) scavenging ability. This is Protein CANDIDATE G-PROTEIN COUPLED RECEPTOR 2 from Arabidopsis thaliana (Mouse-ear cress).